Consider the following 202-residue polypeptide: Endothelin-1 (202 aa).

An N-terminal signal peptide occupies residues 1 to 25; it reads MDYFPVIFSLLFVTFQGAPETAVLG. Residues 26–50 constitute a propeptide that is removed on maturation; that stretch reads AELSTGAENGVQSPPPSTPWRPRRS. 2 cysteine pairs are disulfide-bonded: cysteine 53-cysteine 67 and cysteine 55-cysteine 63. Positions 74 to 202 are excised as a propeptide; it reads VNTPERVVPY…DQKLTHNRAH (129 aa). An endothelin-like region spans residues 110-124; the sequence is CQCAHQKDKKCWNFC.

It belongs to the endothelin/sarafotoxin family. In terms of tissue distribution, highest expression in the adult is in lung. Lower levels found in heart, kidney, brain and intestine. In the embryo, expressed in outer and inner pharyngeal arch surfaces. Also expressed in endothelium of dorsal aorta and arch arteries, and in epithelium of pharyngeal pouches.

The protein resides in the secreted. Its function is as follows. Endothelins are endothelium-derived vasoconstrictor peptides. Probable ligand for G-protein coupled receptors EDNRA and EDNRB which activates PTK2B, BCAR1, BCAR3 and, GTPases RAP1 and RHOA cascade in glomerular mesangial cells. Also binds the DEAR/FBXW7-AS1 receptor. Promotes mesenteric arterial wall remodeling via activation of ROCK signaling and subsequent colocalization of NFATC3 with F-actin filaments. NFATC3 then translocates to the nucleus where it subsequently promotes the transcription of the smooth muscle hypertrophy and differentiation marker ACTA2. The protein is Endothelin-1 (Edn1) of Mus musculus (Mouse).